The following is a 158-amino-acid chain: NAD(P)H-quinone oxidoreductase subunit J, chloroplastic (158 aa).

It belongs to the complex I 30 kDa subunit family. In terms of assembly, NDH is composed of at least 16 different subunits, 5 of which are encoded in the nucleus.

The protein resides in the plastid. It localises to the chloroplast thylakoid membrane. It catalyses the reaction a plastoquinone + NADH + (n+1) H(+)(in) = a plastoquinol + NAD(+) + n H(+)(out). The enzyme catalyses a plastoquinone + NADPH + (n+1) H(+)(in) = a plastoquinol + NADP(+) + n H(+)(out). In terms of biological role, NDH shuttles electrons from NAD(P)H:plastoquinone, via FMN and iron-sulfur (Fe-S) centers, to quinones in the photosynthetic chain and possibly in a chloroplast respiratory chain. The immediate electron acceptor for the enzyme in this species is believed to be plastoquinone. Couples the redox reaction to proton translocation, and thus conserves the redox energy in a proton gradient. The sequence is that of NAD(P)H-quinone oxidoreductase subunit J, chloroplastic from Drimys granadensis.